A 152-amino-acid chain; its full sequence is Small ribosomal subunit protein uS19x (152 aa).

Belongs to the universal ribosomal protein uS19 family.

The protein localises to the cytoplasm. This is Small ribosomal subunit protein uS19x (RPS15D) from Arabidopsis thaliana (Mouse-ear cress).